We begin with the raw amino-acid sequence, 616 residues long: Dihydroxy-acid dehydratase (616 aa).

Asp-81 is a Mg(2+) binding site. Cys-122 is a binding site for [2Fe-2S] cluster. Mg(2+) contacts are provided by Asp-123 and Lys-124. At Lys-124 the chain carries N6-carboxylysine. Residue Cys-195 participates in [2Fe-2S] cluster binding. Residue Glu-491 participates in Mg(2+) binding. Ser-517 (proton acceptor) is an active-site residue.

It belongs to the IlvD/Edd family. As to quaternary structure, homodimer. [2Fe-2S] cluster is required as a cofactor. Requires Mg(2+) as cofactor.

It catalyses the reaction (2R)-2,3-dihydroxy-3-methylbutanoate = 3-methyl-2-oxobutanoate + H2O. The enzyme catalyses (2R,3R)-2,3-dihydroxy-3-methylpentanoate = (S)-3-methyl-2-oxopentanoate + H2O. The protein operates within amino-acid biosynthesis; L-isoleucine biosynthesis; L-isoleucine from 2-oxobutanoate: step 3/4. Its pathway is amino-acid biosynthesis; L-valine biosynthesis; L-valine from pyruvate: step 3/4. In terms of biological role, functions in the biosynthesis of branched-chain amino acids. Catalyzes the dehydration of (2R,3R)-2,3-dihydroxy-3-methylpentanoate (2,3-dihydroxy-3-methylvalerate) into 2-oxo-3-methylpentanoate (2-oxo-3-methylvalerate) and of (2R)-2,3-dihydroxy-3-methylbutanoate (2,3-dihydroxyisovalerate) into 2-oxo-3-methylbutanoate (2-oxoisovalerate), the penultimate precursor to L-isoleucine and L-valine, respectively. This Serratia proteamaculans (strain 568) protein is Dihydroxy-acid dehydratase.